Reading from the N-terminus, the 553-residue chain is Glutamine--tRNA ligase (553 aa).

A 'HIGH' region motif is present at residues 34 to 44 (PEPNGYLHIGH). ATP contacts are provided by residues 35 to 37 (EPN) and 41 to 47 (HIGHAKS). The L-glutamine site is built by aspartate 67 and tyrosine 212. Residues threonine 231, 261-262 (RL), and 269-271 (MSK) contribute to the ATP site. The 'KMSKS' region motif lies at 268-272 (IMSKR).

This sequence belongs to the class-I aminoacyl-tRNA synthetase family. As to quaternary structure, monomer.

It is found in the cytoplasm. The enzyme catalyses tRNA(Gln) + L-glutamine + ATP = L-glutaminyl-tRNA(Gln) + AMP + diphosphate. This is Glutamine--tRNA ligase from Tolumonas auensis (strain DSM 9187 / NBRC 110442 / TA 4).